The chain runs to 370 residues: Death-associated protein kinase 2 (370 aa).

The 263-residue stretch at 23–285 folds into the Protein kinase domain; the sequence is YDIGEELGSG…IQEALRHPWI (263 aa). Residues 29–37 and Lys52 each bind ATP; that span reads LGSGQFAIV. Residue Asp149 is the Proton acceptor of the active site. The tract at residues 277–344 is calmodulin-binding; the sequence is QEALRHPWIT…KVHLRPDEDL (68 aa). The autoinhibitory domain stretch occupies residues 292–301; that stretch reads QAMVRRESVV. Phosphoserine is present on Ser299. Ser318 carries the post-translational modification Phosphoserine; by autocatalysis. The interval 348-370 is disordered; that stretch reads ESDTEEDIARRKALHPRRRSSTS. Ser349 is subject to Phosphoserine. Basic residues predominate over residues 358–370; sequence RKALHPRRRSSTS. Thr369 bears the Phosphothreonine; by PKB/AKT1 mark.

This sequence belongs to the protein kinase superfamily. CAMK Ser/Thr protein kinase family. DAP kinase subfamily. Homodimer in its autoinhibited state. Active as monomer. Isoform 2 but not isoform 1 can interact with ATF4. Interacts with 14-3-3 proteins YWHAB, YWHAE, YWHAG, YWHAH, YWHAQ, YWHAZ and SFN; the interaction requires DAPK2 phosphorylation at Thr-369 and suppresses DAPK2 kinase activity and DAPK2-induced apoptosis. Mg(2+) serves as cofactor. Post-translationally, autophosphorylation at Ser-318 inhibits its catalytic activity. Dephosphorylated at Ser-318 in response to activated Fas and TNF-alpha receptors. In terms of tissue distribution, expressed in neutrophils and eosinophils. Isoform 2 is expressed in embryonic stem cells (at protein level). Isoform 1 is ubiquitously expressed in all tissue types examined with high levels in heart, lung and skeletal muscle.

It is found in the cytoplasm. Its subcellular location is the cytoplasmic vesicle. The protein localises to the autophagosome lumen. It catalyses the reaction L-seryl-[protein] + ATP = O-phospho-L-seryl-[protein] + ADP + H(+). It carries out the reaction L-threonyl-[protein] + ATP = O-phospho-L-threonyl-[protein] + ADP + H(+). With respect to regulation, activated by Ca(2+)/calmodulin. Regulated by a double locking mechanism, involving autophosphorylation at Ser-318, calmodulin binding, and dimerization. In the inactive state, Ser-318 is phosphorylated, and the kinase is dimeric. Activation involves: dephosphorylation at Ser-318, release-of-autoinhibition mechanism where calmodulin binding induces a conformational change that relieves the steric block of the active site by the autoinhibitory domain, and generation of the monomeric active form of the kinase. Calcium/calmodulin-dependent serine/threonine kinase involved in multiple cellular signaling pathways that trigger cell survival, apoptosis, and autophagy. Regulates both type I apoptotic and type II autophagic cell death signals, depending on the cellular setting. The former is caspase-dependent, while the latter is caspase-independent and is characterized by the accumulation of autophagic vesicles. Acts as a mediator of anoikis and a suppressor of beta-catenin-dependent anchorage-independent growth of malignant epithelial cells. May play a role in granulocytic maturation. Regulates granulocytic motility by controlling cell spreading and polarization. Functionally, isoform 2 is not regulated by calmodulin. It can phosphorylate MYL9. It can induce membrane blebbing and autophagic cell death. The protein is Death-associated protein kinase 2 (DAPK2) of Homo sapiens (Human).